The primary structure comprises 955 residues: 26S proteasome non-ATPase regulatory subunit 1 (955 aa).

The interval 279 to 313 is disordered; sequence PGSTNTGTVPGSEKDSDAMEAEEKPGSTCVGKSAE. A compositionally biased stretch (basic and acidic residues) spans 290–303; that stretch reads SEKDSDAMEAEEKP. 10 PC repeats span residues 403 to 436, 441 to 474, 476 to 510, 511 to 545, 547 to 580, 581 to 616, 617 to 649, 651 to 685, 686 to 726, and 729 to 761; these read TATA…PGSA, GGLY…DIVR, GGSL…VTGE, AAGL…EKIL, GLAV…ILRR, SGMY…DVRR, AAVE…PHVR, GAAM…YVRQ, GALI…DVMA, and GAIL…PSVV. Disordered regions lie at residues 839-879 and 932-955; these read AKKK…NFQL and AHGP…YIDD. Basic and acidic residues-rich tracts occupy residues 842–854 and 861–874; these read KEKE…KEEE and TEKK…KEPE. Residues 938–955 show a composition bias toward acidic residues; sequence EEEEQEPEPPEPFEYIDD.

This sequence belongs to the proteasome subunit S1 family. As to quaternary structure, component of the 19S proteasome regulatory particle complex. The 26S proteasome consists of a 20S core particle (CP) and two 19S regulatory subunits (RP). The regulatory particle is made of a lid composed of 9 subunits, a base containing 6 ATPases and few additional components including PSMD1. Interacts with ADRM1.

Its function is as follows. Component of the 26S proteasome, a multiprotein complex involved in the ATP-dependent degradation of ubiquitinated proteins. This complex plays a key role in the maintenance of protein homeostasis by removing misfolded or damaged proteins, which could impair cellular functions, and by removing proteins whose functions are no longer required. Therefore, the proteasome participates in numerous cellular processes, including cell cycle progression, apoptosis, or DNA damage repair. This Gallus gallus (Chicken) protein is 26S proteasome non-ATPase regulatory subunit 1 (PSMD1).